The primary structure comprises 325 residues: Heat-inducible transcription repressor HrcA (325 aa).

Belongs to the HrcA family.

Its function is as follows. Negative regulator of class I heat shock genes (grpE-dnaK-dnaJ and groELS operons). Prevents heat-shock induction of these operons. This is Heat-inducible transcription repressor HrcA from Staphylococcus aureus (strain MRSA252).